A 77-amino-acid polypeptide reads, in one-letter code: NEDD8-like protein RUB1 (77 aa).

One can recognise a Ubiquitin-like domain in the interval 1–74; sequence MIVKVKTLTG…MQLHLVLTLR (74 aa). Residue Gly76 forms a Glycyl lysine isopeptide (Gly-Lys) (interchain with K-? in acceptor proteins) linkage. A propeptide is located at residue Asn77.

In terms of assembly, interacts with CDC53 and DCN1.

Functionally, ubiquitin-like protein modifier that can be covalently attached to lysine residues of target proteins. Activated by the dimeric UBA3-ULA1 E1 enzyme and conjugated by the E2 UBC12 to substrate proteins. RUB1-conjugated (neddylated) substrate proteins include the cullins CDC53, RTT101 and CUL3, and the modification enhances the ubiquitin-ligase activity of the corresponding cullin-RING-based E3 ubiquitin-protein ligase complexes (CRLs). This is NEDD8-like protein RUB1 (RUB1) from Saccharomyces cerevisiae (strain ATCC 204508 / S288c) (Baker's yeast).